A 377-amino-acid polypeptide reads, in one-letter code: Presenilin-associated rhomboid-like protein, mitochondrial (377 aa).

A mitochondrion-targeting transit peptide spans 1–50; the sequence is MALYSWVQRGWRCGQTWAPLLGGGYRELSATQARQLLGRRFNLLLQQKCG. Residues 51 to 95 are Mitochondrial matrix-facing; sequence FRKAPRKVEPRRSDTGSSGEAYKRSALIPPLEETVFYPSPYPVRT. S63 and S68 each carry phosphoserine. The helical transmembrane segment at 96 to 116 threads the bilayer; that stretch reads LLKPFFFTVGFTGCAFGSAAI. The Mitochondrial intermembrane segment spans residues 117 to 165; the sequence is WQYESLKSRVQSYFDGIKADWLDSIRPQKEGNLRKEINKWWNSLSDGQR. A helical membrane pass occupies residues 166 to 186; that stretch reads TVTGIIAANALVFCLWRVPSL. The Mitochondrial matrix portion of the chain corresponds to 187–214; it reads HRTMIRYFTSNPASKVLCSPMLLSTFSH. The helical transmembrane segment at 215-235 threads the bilayer; it reads FSLFHMAANMYVLWSFSTSIV. The Mitochondrial intermembrane portion of the chain corresponds to 236-242; it reads NILGQEQ. The helical transmembrane segment at 243-263 threads the bilayer; that stretch reads FVAVYLSAGVISNFVSYVCKV. Topologically, residues 264-268 are mitochondrial matrix; the sequence is ATGRY. The helical transmembrane segment at 269–289 threads the bilayer; the sequence is GPSLGASGAIMTVLAAVCTKI. The Nucleophile role is filled by S275. The Mitochondrial intermembrane segment spans residues 290 to 293; sequence PEGR. Residues 294–314 form a helical membrane-spanning segment; it reads LAIIFLPVFTFTAGNALKAII. Residues 315–331 lie on the Mitochondrial matrix side of the membrane; that stretch reads AMDTAGMILGWKFFDHA. The chain crosses the membrane as a helical span at residues 332 to 352; that stretch reads AHLGGALFGIWYITYGHELIW. Residue H333 is part of the active site. At 353-377 the chain is on the mitochondrial intermembrane side; it reads KNREPLVKIWHEIRTNGPKKGGGSK.

This sequence belongs to the peptidase S54 family. In terms of assembly, interacts with PSEN1 and PSEN2. Binds OPA1. In terms of processing, P-beta is proteolytically processed (beta-cleavage) in a PARL-dependent manner.

Its subcellular location is the mitochondrion inner membrane. It localises to the nucleus. The catalysed reaction is Cleaves type-1 transmembrane domains using a catalytic dyad composed of serine and histidine that are contributed by different transmembrane domains.. Its function is as follows. Required for the control of apoptosis during postnatal growth. Essential for proteolytic processing of an antiapoptotic form of OPA1 which prevents the release of mitochondrial cytochrome c in response to intrinsic apoptotic signals. Required for the maturation of PINK1 into its 52kDa mature form after its cleavage by mitochondrial-processing peptidase (MPP). Promotes cleavage of serine/threonine-protein phosphatase PGAM5 in damaged mitochondria in response to loss of mitochondrial membrane potential. Mediates differential cleavage of PINK1 and PGAM5 depending on the health status of mitochondria, disassociating from PINK1 and associating with PGAM5 in response to mitochondrial membrane potential loss. Required for processing of CLPB into a form with higher protein disaggregase activity by removing an autoinhibitory N-terminal peptide. Promotes processing of DIABLO/SMAC in the mitochondrion which is required for DIABLO apoptotic activity. Also required for cleavage of STARD7 and TTC19. Promotes changes in mitochondria morphology regulated by phosphorylation of P-beta domain. This chain is Presenilin-associated rhomboid-like protein, mitochondrial, found in Rattus norvegicus (Rat).